The primary structure comprises 577 residues: Arginine--tRNA ligase (577 aa).

Positions P122–H132 match the 'HIGH' region motif.

This sequence belongs to the class-I aminoacyl-tRNA synthetase family. As to quaternary structure, monomer.

The protein localises to the cytoplasm. The enzyme catalyses tRNA(Arg) + L-arginine + ATP = L-arginyl-tRNA(Arg) + AMP + diphosphate. The protein is Arginine--tRNA ligase of Klebsiella pneumoniae (strain 342).